A 225-amino-acid polypeptide reads, in one-letter code: ATP-dependent dethiobiotin synthetase BioD (225 aa).

12–17 (GVGKTV) is an ATP binding site. T16 lines the Mg(2+) pocket. K37 is a catalytic residue. T41 serves as a coordination point for substrate. Residues D46, 105-108 (EGAG), 166-167 (GS), and 196-198 (PEG) contribute to the ATP site. Mg(2+) contacts are provided by D46 and E105.

It belongs to the dethiobiotin synthetase family. Homodimer. It depends on Mg(2+) as a cofactor.

It is found in the cytoplasm. The enzyme catalyses (7R,8S)-7,8-diammoniononanoate + CO2 + ATP = (4R,5S)-dethiobiotin + ADP + phosphate + 3 H(+). Its pathway is cofactor biosynthesis; biotin biosynthesis; biotin from 7,8-diaminononanoate: step 1/2. Catalyzes a mechanistically unusual reaction, the ATP-dependent insertion of CO2 between the N7 and N8 nitrogen atoms of 7,8-diaminopelargonic acid (DAPA, also called 7,8-diammoniononanoate) to form a ureido ring. The sequence is that of ATP-dependent dethiobiotin synthetase BioD from Mycobacteroides abscessus (strain ATCC 19977 / DSM 44196 / CCUG 20993 / CIP 104536 / JCM 13569 / NCTC 13031 / TMC 1543 / L948) (Mycobacterium abscessus).